A 366-amino-acid chain; its full sequence is Putative F-box protein At1g26515 (366 aa).

A disordered region spans residues 1 to 20 (MKTRSKKTKTENNQEKSKEK). Basic and acidic residues predominate over residues 8–20 (TKTENNQEKSKEK). The region spanning 20-66 (KNKFDQLPLDLEIEIFRRLPLKSVARFLTLSKSCAATIRSPSFITSF) is the F-box domain.

The protein is Putative F-box protein At1g26515 of Arabidopsis thaliana (Mouse-ear cress).